The sequence spans 129 residues: Phosphoribosyl-AMP cyclohydrolase (129 aa).

Residue Asp82 coordinates Mg(2+). Cys83 serves as a coordination point for Zn(2+). Residues Asp84 and Asp86 each coordinate Mg(2+). Zn(2+)-binding residues include Cys99 and Cys106.

This sequence belongs to the PRA-CH family. As to quaternary structure, homodimer. Requires Mg(2+) as cofactor. The cofactor is Zn(2+).

Its subcellular location is the cytoplasm. The enzyme catalyses 1-(5-phospho-beta-D-ribosyl)-5'-AMP + H2O = 1-(5-phospho-beta-D-ribosyl)-5-[(5-phospho-beta-D-ribosylamino)methylideneamino]imidazole-4-carboxamide. It participates in amino-acid biosynthesis; L-histidine biosynthesis; L-histidine from 5-phospho-alpha-D-ribose 1-diphosphate: step 3/9. Catalyzes the hydrolysis of the adenine ring of phosphoribosyl-AMP. This is Phosphoribosyl-AMP cyclohydrolase from Methanosarcina barkeri (strain Fusaro / DSM 804).